Reading from the N-terminus, the 366-residue chain is Ribosomal RNA large subunit methyltransferase M (366 aa).

Residues Ser-188, 221 to 224, Asp-240, Asp-260, and Asp-277 each bind S-adenosyl-L-methionine; that span reads CPGG. Lys-306 serves as the catalytic Proton acceptor.

This sequence belongs to the class I-like SAM-binding methyltransferase superfamily. RNA methyltransferase RlmE family. RlmM subfamily. In terms of assembly, monomer.

The protein resides in the cytoplasm. The enzyme catalyses cytidine(2498) in 23S rRNA + S-adenosyl-L-methionine = 2'-O-methylcytidine(2498) in 23S rRNA + S-adenosyl-L-homocysteine + H(+). In terms of biological role, catalyzes the 2'-O-methylation at nucleotide C2498 in 23S rRNA. This chain is Ribosomal RNA large subunit methyltransferase M, found in Musicola paradisiaca (strain Ech703) (Dickeya paradisiaca).